The chain runs to 478 residues: Protein nucleotidyltransferase YdiU (478 aa).

Positions 84, 86, 87, 107, 119, 120, 170, and 177 each coordinate ATP. Asp-246 (proton acceptor) is an active-site residue. 2 residues coordinate Mg(2+): Asn-247 and Asp-256. Asp-256 provides a ligand contact to ATP.

Belongs to the SELO family. Mg(2+) serves as cofactor. It depends on Mn(2+) as a cofactor.

The catalysed reaction is L-seryl-[protein] + ATP = 3-O-(5'-adenylyl)-L-seryl-[protein] + diphosphate. It carries out the reaction L-threonyl-[protein] + ATP = 3-O-(5'-adenylyl)-L-threonyl-[protein] + diphosphate. It catalyses the reaction L-tyrosyl-[protein] + ATP = O-(5'-adenylyl)-L-tyrosyl-[protein] + diphosphate. The enzyme catalyses L-histidyl-[protein] + UTP = N(tele)-(5'-uridylyl)-L-histidyl-[protein] + diphosphate. The catalysed reaction is L-seryl-[protein] + UTP = O-(5'-uridylyl)-L-seryl-[protein] + diphosphate. It carries out the reaction L-tyrosyl-[protein] + UTP = O-(5'-uridylyl)-L-tyrosyl-[protein] + diphosphate. Its function is as follows. Nucleotidyltransferase involved in the post-translational modification of proteins. It can catalyze the addition of adenosine monophosphate (AMP) or uridine monophosphate (UMP) to a protein, resulting in modifications known as AMPylation and UMPylation. The chain is Protein nucleotidyltransferase YdiU from Shigella boydii serotype 18 (strain CDC 3083-94 / BS512).